A 233-amino-acid polypeptide reads, in one-letter code: 7-cyano-7-deazaguanine synthase (233 aa).

8–18 (FSGGQDSTTCL) lines the ATP pocket. Residues Cys-188, Cys-197, Cys-200, and Cys-203 each coordinate Zn(2+).

Belongs to the QueC family. Zn(2+) serves as cofactor.

The catalysed reaction is 7-carboxy-7-deazaguanine + NH4(+) + ATP = 7-cyano-7-deazaguanine + ADP + phosphate + H2O + H(+). Its pathway is purine metabolism; 7-cyano-7-deazaguanine biosynthesis. Functionally, catalyzes the ATP-dependent conversion of 7-carboxy-7-deazaguanine (CDG) to 7-cyano-7-deazaguanine (preQ(0)). The chain is 7-cyano-7-deazaguanine synthase from Klebsiella pneumoniae (strain 342).